Here is a 999-residue protein sequence, read N- to C-terminus: Collagen alpha-1(I) chain (999 aa).

A disordered region spans residues 1 to 999 (SYGYDEKSAG…PGPPGPPGPP (999 aa)). The residue at position 7 (K7) is an Allysine. At S8 the chain carries Phosphoserine. P27, P30, P33, P42, P45, P48, P62, P77, P83, P92, and P98 each carry 4-hydroxyproline. The segment covering 65–79 (NGDDGEAGKPGRPGE) has biased composition (basic and acidic residues). The residue at position 101 (K101) is a 5-hydroxylysine; alternate. O-linked (Gal...) hydroxylysine; alternate glycosylation is present at K101. S107 is modified (phosphoserine). Low complexity predominate over residues 115 to 131 (DAGPAGPKGEPGSPGEN). 16 positions are modified to 4-hydroxyproline: P125, P128, P134, P143, P149, P170, P179, P182, P209, P212, P224, P230, P239, P245, P248, and P263. Residues 149 to 167 (PGASGPAGARGNDGATGAA) show a composition bias toward low complexity. The segment covering 169 to 181 (PPGPTGPAGPPGF) has biased composition (pro residues). Low complexity predominate over residues 215-254 (AGAAGPAGNPGADGQPGAKGANGAPGIAGAPGFPGARGPS). K266 carries the post-translational modification 5-hydroxylysine. 4-hydroxyproline occurs at positions 272, 275, 287, 296, 311, 317, 326, and 332. The segment covering 321–330 (GERGGPGSRG) has biased composition (gly residues). The residue at position 341 (K341) is a 5-hydroxylysine. 24 positions are modified to 4-hydroxyproline: P350, P359, P365, P371, P380, P383, P392, P401, P407, P419, P429, P432, P450, P468, P474, P480, P486, P492, P498, P510, P526, P532, P538, and P547. The span at 374-400 (KGLTGSPGSPGPDGKTGPPGPAGQDGR) shows a compositional bias: low complexity. The segment covering 462–489 (QGPAGSPGFQGLPGPAGPPGEAGKPGEQ) has biased composition (low complexity). Low complexity predominate over residues 522–535 (APGAPGSQGAPGLQ). K559 bears the 5-hydroxylysine mark. P565, P580, and P586 each carry 4-hydroxyproline. The span at 592-606 (SGPSGPAGPTGARGA) shows a compositional bias: low complexity. Residue S595 is modified to Phosphoserine. 4-hydroxyproline occurs at positions 607, 613, 616, 625, 631, 649, 658, and 667. The span at 619–646 (AGFAGPPGADGQPGAKGEPGDAGAKGDA) shows a compositional bias: low complexity. Positions 648–660 (PPGPAGPTGPPGP) are enriched in pro residues. 5-hydroxylysine is present on K670. A compositionally biased stretch (low complexity) spans 675 to 691 (SAGPPGATGFPGAAGRV). 2 positions are modified to 4-hydroxyproline: P679 and P685. Residue P693 is modified to 3-hydroxyproline. P694, P703, P706, P727, P736, P745, P754, P772, P781, P784, P790, P805, P811, P817, P826, and P832 each carry 4-hydroxyproline. Residues 720 to 729 (ETGPAGRPGE) are compositionally biased toward low complexity. Positions 739–754 (SGEKGSPGADGPAGAP) are enriched in low complexity. Positions 804–814 (PPGPVGPPGLA) are enriched in pro residues. Residues 816 to 831 (PPGESGREGSPGAEGS) are compositionally biased toward low complexity. K841 is modified (5-hydroxylysine). Residues 849–864 (PGPPGAPGAPGAPGPV) show a composition bias toward pro residues. P852, P855, and P858 each carry 4-hydroxyproline. The span at 885 to 899 (AGPAGARGPAGPQGP) shows a compositional bias: low complexity. Residues 900-914 (RGDKGETGEQGDRGI) show a composition bias toward basic and acidic residues. Position 903 is a 5-hydroxylysine (K903). K915 is subject to 5-hydroxylysine; alternate. Residue K915 is glycosylated (O-linked (Gal...) hydroxylysine; alternate). 4 positions are modified to 4-hydroxyproline: P930, P933, P951, and P966. The segment covering 933-966 (PGEQGPSGASGPAGPRGPPGSAGSPGKDGLNGLP) has biased composition (low complexity). The residue at position 971 (P971) is a 3-hydroxyproline. Residue P972 is modified to 4-hydroxyproline. A compositionally biased stretch (pro residues) spans 984 to 999 (VGPPGPPGPPGPPGPP). Residue P986 is modified to 3-hydroxyproline. At P987 the chain carries 4-hydroxyproline. The residue at position 989 (P989) is a 3-hydroxyproline. A 4-hydroxyproline modification is found at P990. Residue P992 is modified to 3-hydroxyproline. 4-hydroxyproline occurs at positions 993, 996, and 999.

This sequence belongs to the fibrillar collagen family. In terms of assembly, trimers of one alpha 2(I) and two alpha 1(I) chains. Post-translationally, contains mostly 4-hydroxyproline. Proline residues at the third position of the tripeptide repeating unit (G-X-Y) are hydroxylated in some or all of the chains. Contains 3-hydroxyproline at a few sites. This modification occurs on the first proline residue in the sequence motif Gly-Pro-Hyp, where Hyp is 4-hydroxyproline. In terms of processing, lysine residues at the third position of the tripeptide repeating unit (G-X-Y) are 5-hydroxylated in some or all of the chains. Post-translationally, O-glycosylated on hydroxylated lysine residues. The O-linked glycan consists of a Glc-Gal disaccharide. In terms of tissue distribution, expressed in bones.

The protein resides in the secreted. It is found in the extracellular space. It localises to the extracellular matrix. Its function is as follows. Type I collagen is a member of group I collagen (fibrillar forming collagen). The protein is Collagen alpha-1(I) chain of Choloepus hoffmanni (Hoffmann's two-fingered sloth).